The primary structure comprises 147 residues: D-aminoacyl-tRNA deacylase (147 aa).

Positions 137–138 (GP) match the Gly-cisPro motif, important for rejection of L-amino acids motif.

Belongs to the DTD family. In terms of assembly, homodimer.

It localises to the cytoplasm. The enzyme catalyses glycyl-tRNA(Ala) + H2O = tRNA(Ala) + glycine + H(+). It carries out the reaction a D-aminoacyl-tRNA + H2O = a tRNA + a D-alpha-amino acid + H(+). Functionally, an aminoacyl-tRNA editing enzyme that deacylates mischarged D-aminoacyl-tRNAs. Also deacylates mischarged glycyl-tRNA(Ala), protecting cells against glycine mischarging by AlaRS. Acts via tRNA-based rather than protein-based catalysis; rejects L-amino acids rather than detecting D-amino acids in the active site. By recycling D-aminoacyl-tRNA to D-amino acids and free tRNA molecules, this enzyme counteracts the toxicity associated with the formation of D-aminoacyl-tRNA entities in vivo and helps enforce protein L-homochirality. This chain is D-aminoacyl-tRNA deacylase, found in Bacillus pumilus (strain SAFR-032).